Reading from the N-terminus, the 301-residue chain is Transcription elongation factor A protein 1 (301 aa).

M1 is subject to N-acetylmethionine. The 78-residue stretch at 3–80 folds into the TFIIS N-terminal domain; the sequence is DEVIRIAKKM…KSWKKLLDGP (78 aa). Residue K55 forms a Glycyl lysine isopeptide (Lys-Gly) (interchain with G-Cter in ubiquitin) linkage. Phosphoserine is present on residues S57, S81, S97, and S100. The segment covering 76 to 93 has biased composition (basic and acidic residues); it reads LLDGPSTDKDSEEKKKDT. Residues 76–139 form a disordered region; the sequence is LLDGPSTDKD…FPRAPSTSDS (64 aa). One can recognise a TFIIS central domain in the interval 140-256; that stretch reads VRLKCREMLA…EHQMAKTGGT (117 aa). The TFIIS-type zinc finger occupies 259 to 299; that stretch reads DLFTCGKCKKKNCTYTQVQTRSADEPMTTFVVCNECGNRWK. Zn(2+) is bound by residues C263, C266, C291, and C294.

This sequence belongs to the TFS-II family. In terms of assembly, interacts with EAF2. Associates with UBR5 and forms a transcription regulatory complex made of CDK9, Pol II, UBR5 and TCEA1/TFIIS. Part of TBP-based Pol II pre-initiation complex (PIC), in which Pol II core assembles with general transcription factors and other specific initiation factors including GTF2E1, GTF2E2, GTF2F1, GTF2F2, TCEA1, ERCC2, ERCC3, GTF2H2, GTF2H3, GTF2H4, GTF2H5, GTF2A1, GTF2A2, GTF2B and TBP; this large multi-subunit PIC complex mediates DNA unwinding and targets Pol II core to the transcription start site where the first phosphodiester bond forms.

The protein localises to the nucleus. Necessary for efficient RNA polymerase II transcription elongation past template-encoded arresting sites. The arresting sites in DNA have the property of trapping a certain fraction of elongating RNA polymerases that pass through, resulting in locked ternary complexes. Cleavage of the nascent transcript by S-II allows the resumption of elongation from the new 3'-terminus. This Bos taurus (Bovine) protein is Transcription elongation factor A protein 1 (TCEA1).